The following is a 245-amino-acid chain: DNA polymerase sliding clamp (245 aa).

Belongs to the PCNA family. In terms of assembly, homotrimer. The subunits circularize to form a toroid; DNA passes through its center. Replication factor C (RFC) is required to load the toroid on the DNA.

Sliding clamp subunit that acts as a moving platform for DNA processing. Responsible for tethering the catalytic subunit of DNA polymerase and other proteins to DNA during high-speed replication. The protein is DNA polymerase sliding clamp of Picrophilus torridus (strain ATCC 700027 / DSM 9790 / JCM 10055 / NBRC 100828 / KAW 2/3).